The chain runs to 2876 residues: Nipped-B-like protein B (2876 aa).

Polar residues-rich tracts occupy residues 124–142 and 149–167; these read PQNSMHGSPASNYQQTTIT and YVQTQAGSGSRYMPQQNSP. 4 disordered regions span residues 124-197, 246-367, 439-494, and 525-1017; these read PQNS…PIQQ, NDEG…SDAE, RESA…AGNK, and EGPV…FPNY. Pro residues predominate over residues 276-290; sequence GPRPPLILQSPPPYT. Positions 439-457 are enriched in basic and acidic residues; it reads RESAIERERCSKEVQDKDK. The segment covering 471-480 has biased composition (low complexity); sequence PGAAGTAGAS. Residues 481–490 are compositionally biased toward gly residues; that stretch reads GTPGVGGGCN. Basic and acidic residues-rich tracts occupy residues 556–577, 586–955, and 962–1005; these read SKTDGEVQRTVDGRPEVIKQRV, VDGR…EQRS, and VKQE…HKPQ. The PxVxL motif signature appears at 1068 to 1081; the sequence is NKGAKPVVVLKKLS. Disordered stretches follow at residues 1088–1229 and 1724–1747; these read MISN…EPKL and TEKAMKSQRDDDSSDGPHHAKDVE. A compositionally biased stretch (low complexity) spans 1090–1100; the sequence is SNSRSSKSSRS. Composition is skewed to basic and acidic residues over residues 1104 to 1119 and 1156 to 1183; these read RFRETDSRLPLCERVK and KDRDKTWEYEEKDRRGSGDHRRSFDSRR. Positions 1212-1223 are enriched in basic residues; it reads KLKKKEKQKKRK. HEAT repeat units lie at residues 1803-1841, 1879-1917, 1981-2020, 2203-2241, and 2349-2387; these read AQSFDIYLTQILRVLGESAIAVRTKAMKCLSEVVAVDPS, PQLTEQYYDMLIERILDTGISVRKRVIKILRDICLEQPT, YDWFEQLLQNLLKSEEDASYKPARKACAQLVDSLVEHILK, VVIKDKVLELLLYFTKNDDEEVQTKAIIGLGFLFIQDPG, and LIHPVQCVPYLIAMGTDSEPTMRNKADQQLVEIDKKYTG. Disordered regions lie at residues 2516 to 2590 and 2728 to 2774; these read EVVK…DSDL and ALLG…GHRN. Basic residues predominate over residues 2519–2537; it reads KKKKKKKKKKKQKQKRGKK. The segment covering 2548 to 2563 has biased composition (low complexity); it reads RSSSSSSSSSSSSSDS. The segment covering 2762 to 2774 has biased composition (basic and acidic residues); it reads RTGDSAEASGHRN.

It belongs to the SCC2/Nipped-B family.

The protein resides in the nucleus. Its function is as follows. May play a structural role in chromatin. Involved in sister chromatid cohesion, possibly by facilitating the cohesin complex loading. Transcription factor, which may promote cortical neuron migration during brain development by regulating the transcription of crucial genes in this process. This is Nipped-B-like protein B (nipblb) from Danio rerio (Zebrafish).